Consider the following 130-residue polypeptide: Small ribosomal subunit protein uS11c (130 aa).

Belongs to the universal ribosomal protein uS11 family. Part of the 30S ribosomal subunit.

It is found in the plastid. The protein localises to the chloroplast. This chain is Small ribosomal subunit protein uS11c, found in Guillardia theta (Cryptophyte).